The primary structure comprises 359 residues: Protein trichome birefringence-like 42 (359 aa).

The helical; Signal-anchor for type II membrane protein transmembrane segment at 7 to 25 (LFLLLLIFLVDLSDYGVLA) threads the bilayer. The GDS motif motif lies at 110–112 (GDS). Positions 335–349 (DCSHWCLPGVPDAWN) match the DCXHWCLPGXXDXWN motif motif.

The protein belongs to the PC-esterase family. TBL subfamily.

It localises to the membrane. Functionally, may act as a bridging protein that binds pectin and other cell wall polysaccharides. Probably involved in maintaining esterification of pectins. May be involved in the specific O-acetylation of cell wall polymers. This Arabidopsis thaliana (Mouse-ear cress) protein is Protein trichome birefringence-like 42 (TBL42).